A 355-amino-acid chain; its full sequence is Undecaprenyl-phosphate alpha-N-acetylglucosaminyl 1-phosphate transferase (355 aa).

8 consecutive transmembrane segments (helical) span residues 1–21, 39–59, 63–83, 123–143, 182–202, 208–228, 237–257, and 315–335; these read MLSIFVTFLGAFLTLIVMRPL, GTIPLIGGASLFVGNLCYYLM, QLRLPYLYLFSIFVLLAIGIL, FQLTLGSIGLIITVFATIAII, WSFALIVSILPYLMLNLGIPF, VFMGDAGSTLIGFTIIWILLL, MNPVTALWIIAIPLIDMVAII, and WAMFVGFFILFFLYVYSITHA.

The protein belongs to the glycosyltransferase 4 family. WecA subfamily. Mg(2+) serves as cofactor. Requires Mn(2+) as cofactor.

It is found in the cell inner membrane. It catalyses the reaction di-trans,octa-cis-undecaprenyl phosphate + UDP-N-acetyl-alpha-D-glucosamine = N-acetyl-alpha-D-glucosaminyl-di-trans,octa-cis-undecaprenyl diphosphate + UMP. It participates in bacterial outer membrane biogenesis; LPS O-antigen biosynthesis. Its function is as follows. Catalyzes the transfer of the GlcNAc-1-phosphate moiety from UDP-GlcNAc onto the carrier lipid undecaprenyl phosphate (C55-P), yielding GlcNAc-pyrophosphoryl-undecaprenyl (GlcNAc-PP-C55). This chain is Undecaprenyl-phosphate alpha-N-acetylglucosaminyl 1-phosphate transferase, found in Haemophilus influenzae (strain ATCC 51907 / DSM 11121 / KW20 / Rd).